A 339-amino-acid polypeptide reads, in one-letter code: Phosphate acyltransferase (339 aa).

The protein belongs to the PlsX family. In terms of assembly, homodimer. Probably interacts with PlsY.

Its subcellular location is the cytoplasm. The catalysed reaction is a fatty acyl-[ACP] + phosphate = an acyl phosphate + holo-[ACP]. It functions in the pathway lipid metabolism; phospholipid metabolism. Its function is as follows. Catalyzes the reversible formation of acyl-phosphate (acyl-PO(4)) from acyl-[acyl-carrier-protein] (acyl-ACP). This enzyme utilizes acyl-ACP as fatty acyl donor, but not acyl-CoA. This chain is Phosphate acyltransferase, found in Helicobacter pylori (strain J99 / ATCC 700824) (Campylobacter pylori J99).